Here is a 686-residue protein sequence, read N- to C-terminus: Methionine--tRNA ligase (686 aa).

The short motif at 15 to 25 is the 'HIGH' region element; the sequence is PYANGPIHLGH. Cys146, Cys149, Cys159, and Cys162 together coordinate Zn(2+). The 'KMSKS' region signature appears at 331–335; that stretch reads KMSKS. Residue Lys334 coordinates ATP. A tRNA-binding domain is found at 584 to 686; the sequence is DFAKIDLRVA…AGVKAGSRVM (103 aa).

Belongs to the class-I aminoacyl-tRNA synthetase family. MetG type 1 subfamily. Homodimer. Zn(2+) is required as a cofactor.

It localises to the cytoplasm. It carries out the reaction tRNA(Met) + L-methionine + ATP = L-methionyl-tRNA(Met) + AMP + diphosphate. Functionally, is required not only for elongation of protein synthesis but also for the initiation of all mRNA translation through initiator tRNA(fMet) aminoacylation. In Mannheimia succiniciproducens (strain KCTC 0769BP / MBEL55E), this protein is Methionine--tRNA ligase.